The chain runs to 1067 residues: Eukaryotic translation initiation factor 3 subunit A (1067 aa).

The stretch at L92 to A121 forms a coiled coil. In terms of domain architecture, PCI spans M339 to F523. Positions R608 to A899 form a coiled coil. Basic and acidic residues-rich tracts occupy residues A617–R632, E642–D665, E795–R901, and A916–A926. Disordered stretches follow at residues A617–D665 and E795–Q1067. 2 stretches are compositionally biased toward low complexity: residues A965–E976 and S1025–S1046.

It belongs to the eIF-3 subunit A family. In terms of assembly, component of the eukaryotic translation initiation factor 3 (eIF-3) complex.

It localises to the cytoplasm. In terms of biological role, RNA-binding component of the eukaryotic translation initiation factor 3 (eIF-3) complex, which is involved in protein synthesis of a specialized repertoire of mRNAs and, together with other initiation factors, stimulates binding of mRNA and methionyl-tRNAi to the 40S ribosome. The eIF-3 complex specifically targets and initiates translation of a subset of mRNAs involved in cell proliferation. This is Eukaryotic translation initiation factor 3 subunit A (tif32) from Neosartorya fischeri (strain ATCC 1020 / DSM 3700 / CBS 544.65 / FGSC A1164 / JCM 1740 / NRRL 181 / WB 181) (Aspergillus fischerianus).